A 253-amino-acid chain; its full sequence is 5-oxoprolinase subunit A (253 aa).

This sequence belongs to the LamB/PxpA family. Forms a complex composed of PxpA, PxpB and PxpC.

The enzyme catalyses 5-oxo-L-proline + ATP + 2 H2O = L-glutamate + ADP + phosphate + H(+). In terms of biological role, catalyzes the cleavage of 5-oxoproline to form L-glutamate coupled to the hydrolysis of ATP to ADP and inorganic phosphate. The protein is 5-oxoprolinase subunit A of Bacillus cereus (strain AH820).